Here is a 651-residue protein sequence, read N- to C-terminus: Mediator of RNA polymerase II transcription subunit 17 (651 aa).

The segment at 51–83 (QGSGSEEEEAAGAEGDAQDWAGAGSSADQDDEE) is disordered. A compositionally biased stretch (low complexity) spans 62–74 (GAEGDAQDWAGAG).

Belongs to the Mediator complex subunit 17 family. Component of the Mediator complex, which is composed of MED1, MED4, MED6, MED7, MED8, MED9, MED10, MED11, MED12, MED13, MED13L, MED14, MED15, MED16, MED17, MED18, MED19, MED20, MED21, MED22, MED23, MED24, MED25, MED26, MED27, MED29, MED30, MED31, CCNC, CDK8 and CDC2L6/CDK11. The MED12, MED13, CCNC and CDK8 subunits form a distinct module termed the CDK8 module. Mediator containing the CDK8 module is less active than Mediator lacking this module in supporting transcriptional activation. Individual preparations of the Mediator complex lacking one or more distinct subunits have been variously termed ARC, CRSP, DRIP, PC2, SMCC and TRAP. Interacts with GATA1, PPARG and STAT2.

Its subcellular location is the nucleus. Functionally, component of the Mediator complex, a coactivator involved in the regulated transcription of nearly all RNA polymerase II-dependent genes. Mediator functions as a bridge to convey information from gene-specific regulatory proteins to the basal RNA polymerase II transcription machinery. Mediator is recruited to promoters by direct interactions with regulatory proteins and serves as a scaffold for the assembly of a functional preinitiation complex with RNA polymerase II and the general transcription factors. The protein is Mediator of RNA polymerase II transcription subunit 17 (MED17) of Bos taurus (Bovine).